Reading from the N-terminus, the 364-residue chain is MISDFNNQEITLEDLEQNNVKLKEGKAKVQFLMRFSLVFSNIFTHIFLFLLIIVSGLFFGLRYTYYNYKIDLITNVYKIKPSIPKLKEIYKEVLEVVDEVKRETDKNSEDSLINKIDEIRGIVKEVTNIAKEFDEKSKEVKPKVEKVIQEGKQVTSNLDKITKEIQALQVNGNGLASRVRRSLTGDINTITNLANNIDFDFNSVKESIEKITGLAQQISKEGKSITKNVEEIKNEVEYFTGKSKEPLKDIDKIKQIYDKKIPIFEKNNKKLQEIWNKLMGIYNEFTVKETKKDYYNYVIYILLFLIIDSLILLVITYMSMISKTIKKLLLFYIFGLLSFNPIVWASIIISLFSRPIKNRKNKFY.

The next 3 helical transmembrane spans lie at 41–61 (NIFT…FFGL), 298–318 (VIYI…ITYM), and 329–349 (LLFY…SIII).

It localises to the membrane. This is an uncharacterized protein from Mycoplasma capricolum subsp. capricolum (strain California kid / ATCC 27343 / NCTC 10154).